A 249-amino-acid polypeptide reads, in one-letter code: tRNA (guanine-N(1)-)-methyltransferase (249 aa).

S-adenosyl-L-methionine is bound by residues Gly-113 and 133–138; that span reads IGDFVL.

It belongs to the RNA methyltransferase TrmD family. In terms of assembly, homodimer.

It is found in the cytoplasm. It catalyses the reaction guanosine(37) in tRNA + S-adenosyl-L-methionine = N(1)-methylguanosine(37) in tRNA + S-adenosyl-L-homocysteine + H(+). Functionally, specifically methylates guanosine-37 in various tRNAs. The polypeptide is tRNA (guanine-N(1)-)-methyltransferase (Aliivibrio salmonicida (strain LFI1238) (Vibrio salmonicida (strain LFI1238))).